Reading from the N-terminus, the 148-residue chain is UPF0260 protein Sfri_1740 (148 aa).

This sequence belongs to the UPF0260 family.

The protein is UPF0260 protein Sfri_1740 of Shewanella frigidimarina (strain NCIMB 400).